An 859-amino-acid polypeptide reads, in one-letter code: Envelope glycoprotein (859 aa).

A propeptide spanning residues 1-6 (MVSIAF) is cleaved from the precursor. The Extracellular segment spans residues 7-614 (YGGIPGGIST…KDLWSHIGNW (608 aa)). Asn-40, Asn-112, Asn-141, Asn-148, Asn-186, Asn-214, Asn-233, Asn-244, Asn-340, Asn-368, Asn-399, Asn-406, Asn-411, and Asn-422 each carry an N-linked (GlcNAc...) asparagine; by host glycan. The fusion peptide stretch occupies residues 446-466 (FGISAIVAAIVAATAIARSAT). 2 N-linked (GlcNAc...) asparagine; by host glycosylation sites follow: Asn-483 and Asn-490. Positions 498 to 513 (LIERQIKILYAMILQT) are immunosuppression. Asn-550 and Asn-557 each carry an N-linked (GlcNAc...) asparagine; by host glycan. Coiled-coil stretches lie at residues 576–624 (ILTT…SIIK) and 663–699 (KKFHHKHASREDTWDQAQHNIHLAGVTGGSGDKYYKQ). The helical transmembrane segment at 615–635 (IPGLGASIIKYIVMFLLIYLL) threads the bilayer. The Cytoplasmic portion of the chain corresponds to 636–859 (LTSSPKILRA…TSHVSMPQYV (224 aa)).

In terms of assembly, the mature envelope protein (Env) consists of a trimer of SU-TM heterodimers attached by noncovalent interactions or by a labile interchain disulfide bond. Post-translationally, specific enzymatic cleavages in vivo yield mature proteins. Envelope glycoproteins are synthesized as an inactive precursor that is N-glycosylated and processed likely by host cell furin or by a furin-like protease in the Golgi to yield the mature SU and TM proteins. The cleavage site between SU and TM requires the minimal sequence [KR]-X-[KR]-R.

The protein resides in the virion membrane. The protein localises to the host cell membrane. In terms of biological role, the surface protein (SU) attaches the virus to the host cell by binding to its receptor. This interaction triggers the refolding of the transmembrane protein (TM) and is thought to activate its fusogenic potential by unmasking its fusion peptide. Fusion occurs at the host cell plasma membrane. Functionally, the transmembrane protein (TM) acts as a class I viral fusion protein. Under the current model, the protein has at least 3 conformational states: pre-fusion native state, pre-hairpin intermediate state, and post-fusion hairpin state. During viral and target cell membrane fusion, the coiled coil regions (heptad repeats) assume a trimer-of-hairpins structure, positioning the fusion peptide in close proximity to the C-terminal region of the ectodomain. The formation of this structure appears to drive apposition and subsequent fusion of viral and target cell membranes. Membranes fusion leads to delivery of the nucleocapsid into the cytoplasm. In Equus asinus (Donkey), this protein is Envelope glycoprotein (env).